A 361-amino-acid polypeptide reads, in one-letter code: Protein RecA (361 aa).

77–84 (GPESSGKT) contributes to the ATP binding site.

The protein belongs to the RecA family.

The protein resides in the cytoplasm. In terms of biological role, can catalyze the hydrolysis of ATP in the presence of single-stranded DNA, the ATP-dependent uptake of single-stranded DNA by duplex DNA, and the ATP-dependent hybridization of homologous single-stranded DNAs. It interacts with LexA causing its activation and leading to its autocatalytic cleavage. The polypeptide is Protein RecA (Rhizobium etli).